The sequence spans 20 residues: Superoxide dismutase [Mn], mitochondrial (20 aa).

Belongs to the iron/manganese superoxide dismutase family. As to quaternary structure, homotetramer. Requires Mn(2+) as cofactor.

The protein resides in the mitochondrion matrix. The enzyme catalyses 2 superoxide + 2 H(+) = H2O2 + O2. Its function is as follows. Destroys superoxide anion radicals which are normally produced within the cells and which are toxic to biological systems. This Hordeum vulgare (Barley) protein is Superoxide dismutase [Mn], mitochondrial (SODA).